The chain runs to 181 residues: Large ribosomal subunit protein uL5 (181 aa).

Belongs to the universal ribosomal protein uL5 family. In terms of assembly, part of the 50S ribosomal subunit; part of the 5S rRNA/L5/L18/L25 subcomplex. Contacts the 5S rRNA and the P site tRNA. Forms a bridge to the 30S subunit in the 70S ribosome.

In terms of biological role, this is one of the proteins that bind and probably mediate the attachment of the 5S RNA into the large ribosomal subunit, where it forms part of the central protuberance. In the 70S ribosome it contacts protein S13 of the 30S subunit (bridge B1b), connecting the 2 subunits; this bridge is implicated in subunit movement. Contacts the P site tRNA; the 5S rRNA and some of its associated proteins might help stabilize positioning of ribosome-bound tRNAs. This Helicobacter acinonychis (strain Sheeba) protein is Large ribosomal subunit protein uL5.